Here is a 242-residue protein sequence, read N- to C-terminus: Neuromodulin (242 aa).

Residues 1–242 (MLCCMRRTKQ…EEREADQEHA (242 aa)) form a disordered region. S-palmitoyl cysteine attachment occurs at residues Cys3 and Cys4. Positions 9-32 (KQVEKNDEDQKIEQDGIKPEDKAH) are enriched in basic and acidic residues. In terms of domain architecture, IQ spans 31-60 (AHKAATKIQASFRGHITRKKLKGEKKGDAQ). Ser41 carries the post-translational modification Phosphoserine; by PHK and PKC. 2 stretches are compositionally biased toward basic and acidic residues: residues 66–84 (GNEK…KEGE) and 98–117 (KAEE…KGEG). Residues 142–157 (ETESATKASTDNSPSS) show a composition bias toward polar residues. 3 positions are modified to phosphoserine: Ser154, Ser156, and Ser157. Positions 158–170 (KAEDAPAKEEPKQ) are enriched in basic and acidic residues. Over residues 171 to 203 (ADVPAAVTAAAAATTPAAEDAAAKATAQPPTDA) the composition is skewed to low complexity. The residue at position 185 (Thr185) is a Phosphothreonine. A phosphoserine; by CK2 mark is found at Ser206 and Ser207. The span at 209-242 (AEEKIEAVDETKPKESARQDEGKGEEREADQEHA) shows a compositional bias: basic and acidic residues.

This sequence belongs to the neuromodulin family. In terms of assembly, identified in a complex containing FGFR4, NCAM1, CDH2, PLCG1, FRS2, SRC, SHC1, GAP43 and CTTN. Interacts (via IQ domain) with calmodulin. Binds calmodulin with a greater affinity in the absence of Ca(2+) than in its presence. Phosphorylated. Phosphorylation of this protein by a protein kinase C is specifically correlated with certain forms of synaptic plasticity. Post-translationally, palmitoylated by ZDHHC3. Palmitoylation is regulated by ARF6 and is essential for plasma membrane association and axonal and dendritic filopodia induction. Deacylated by LYPLA2.

It localises to the cell membrane. The protein localises to the cell projection. Its subcellular location is the growth cone membrane. The protein resides in the synapse. It is found in the filopodium membrane. It localises to the perikaryon. The protein localises to the dendrite. Its subcellular location is the axon. The protein resides in the cytoplasm. Its function is as follows. This protein is associated with nerve growth. It is a major component of the motile 'growth cones' that form the tips of elongating axons. Plays a role in axonal and dendritic filopodia induction. The protein is Neuromodulin (GAP43) of Felis catus (Cat).